Here is a 374-residue protein sequence, read N- to C-terminus: S-adenosylmethionine:tRNA ribosyltransferase-isomerase (374 aa).

This sequence belongs to the QueA family. As to quaternary structure, monomer.

The protein resides in the cytoplasm. It carries out the reaction 7-aminomethyl-7-carbaguanosine(34) in tRNA + S-adenosyl-L-methionine = epoxyqueuosine(34) in tRNA + adenine + L-methionine + 2 H(+). The protein operates within tRNA modification; tRNA-queuosine biosynthesis. In terms of biological role, transfers and isomerizes the ribose moiety from AdoMet to the 7-aminomethyl group of 7-deazaguanine (preQ1-tRNA) to give epoxyqueuosine (oQ-tRNA). The polypeptide is S-adenosylmethionine:tRNA ribosyltransferase-isomerase (Prochlorococcus marinus (strain MIT 9301)).